A 409-amino-acid polypeptide reads, in one-letter code: Nucleoprotein (409 aa).

Disordered regions lie at residues 1–64 and 167–197; these read MSAG…SNVK and RNSSAVTSRENSRPGSRDSSRGRQRSRVDDD. An RNA-binding region spans residues 30–161; sequence GTGQASWFQS…NNYRWDFIAL (132 aa). One can recognise a CoV N NTD domain in the interval 32 to 157; the sequence is GQASWFQSLK…GGPDNNYRWD (126 aa). A compositionally biased stretch (basic and acidic residues) spans 176-197; that stretch reads ENSRPGSRDSSRGRQRSRVDDD. Ser192 carries the post-translational modification Phosphoserine; by host. A CoV N CTD domain is found at 217 to 333; sequence SKQKANEMAE…ECVDGVGTRP (117 aa). Positions 228 to 335 are dimerization; that stretch reads KYHKRAIAPG…VDGVGTRPKD (108 aa). A disulfide bridge connects residues Cys322 and Cys325. Residues 327 to 409 are disordered; the sequence is DGVGTRPKDD…GEGAFDDINI (83 aa). The span at 332–349 shows a compositional bias: basic and acidic residues; it reads RPKDDPTPRSRAASKDRN. The residue at position 374 (Thr374) is a Phosphothreonine; by host.

This sequence belongs to the gammacoronavirus nucleocapsid protein family. In terms of assembly, homooligomer. Both monomeric and oligomeric forms interact with RNA. Interacts with protein M. Interacts with NSP3; this interaction serves to tether the genome to the newly translated replicase-transcriptase complex at a very early stage of infection. Post-translationally, ADP-ribosylated. The ADP-ribosylation is retained in the virion during infection. In terms of processing, phosphorylated on serine and threonine residues.

The protein localises to the virion. It is found in the host endoplasmic reticulum-Golgi intermediate compartment. The protein resides in the host Golgi apparatus. In terms of biological role, packages the positive strand viral genome RNA into a helical ribonucleocapsid (RNP) and plays a fundamental role during virion assembly through its interactions with the viral genome and membrane protein M. Plays an important role in enhancing the efficiency of subgenomic viral RNA transcription as well as viral replication. The sequence is that of Nucleoprotein from Gallus gallus (Chicken).